The sequence spans 124 residues: U33-theraphotoxin-Cg1c (124 aa).

The signal sequence occupies residues 1-17 (MKFAVAIAFTLLVCVFA). 5 cysteine pairs are disulfide-bonded: Cys-26–Cys-37, Cys-31–Cys-51, Cys-36–Cys-75, Cys-61–Cys-83, and Cys-77–Cys-94. The span at 93–108 (RCQEESGKSDKSKESQ) shows a compositional bias: basic and acidic residues. The tract at residues 93 to 124 (RCQEESGKSDKSKESQGSDESEESEESKESSG) is disordered. Positions 109–118 (GSDESEESEE) are enriched in acidic residues.

The protein belongs to the neurotoxin 32 family. Expressed by the venom gland.

Its subcellular location is the secreted. This Chilobrachys guangxiensis (Chinese earth tiger tarantula) protein is U33-theraphotoxin-Cg1c.